Here is a 194-residue protein sequence, read N- to C-terminus: Type II restriction enzyme OkrAI (194 aa).

Positions 71, 86, and 100 each coordinate Mg(2+). Catalysis depends on glutamate 101, which acts as the Proton acceptor.

As to quaternary structure, homodimer. Requires Mg(2+) as cofactor.

It catalyses the reaction Endonucleolytic cleavage of DNA to give specific double-stranded fragments with terminal 5'-phosphates.. A P subtype restriction enzyme that recognizes the double-stranded sequence 5'-GGATCC-3' and cleaves after G-1. In Oceanobacter kriegii (Oceanospirillum kriegii), this protein is Type II restriction enzyme OkrAI.